Consider the following 428-residue polypeptide: Isocitrate dehydrogenase [NADP], mitochondrial (428 aa).

Residues 1–16 (MSMLSRRLFSTSRLAA) constitute a mitochondrion transit peptide. Residues 91-93 (TIT) and R98 contribute to the NADP(+) site. T93 lines the substrate pocket. Residues 110 to 116 (SPNGTIR), R125, and R148 each bind substrate. Position 269 (D269) interacts with Mn(2+). NADP(+) is bound at residue K277. D292 serves as a coordination point for Mn(2+). NADP(+)-binding positions include 327-332 (GTVTRH) and N345.

Belongs to the isocitrate and isopropylmalate dehydrogenases family. In terms of assembly, homodimer. It depends on Mg(2+) as a cofactor. Mn(2+) is required as a cofactor.

The protein resides in the mitochondrion. The catalysed reaction is D-threo-isocitrate + NADP(+) = 2-oxoglutarate + CO2 + NADPH. With respect to regulation, the enzyme is subject to end product inhibition by NADPH and 2-oxoglutarate. Mitochondrial IDP1 may regulate flux through the tricarboxylic acid cycle and respiration. Its probably critical function is the production of NADPH. This Saccharomyces cerevisiae (strain ATCC 204508 / S288c) (Baker's yeast) protein is Isocitrate dehydrogenase [NADP], mitochondrial (IDP1).